Consider the following 558-residue polypeptide: Tyrosine N-monooxygenase (558 aa).

Residues 13-33 traverse the membrane as a helical segment; that stretch reads VLAAPLLSSSAILKLLLFVVT. The segment at 48 to 67 is disordered; sequence TTKCSSTTCASPPAGVGNPP. Low complexity predominate over residues 49-65; that stretch reads TKCSSTTCASPPAGVGN. Residues R138, R167, H422, R491, and C493 each contribute to the heme b site.

This sequence belongs to the cytochrome P450 family. Heme b serves as cofactor.

The protein resides in the endoplasmic reticulum membrane. It catalyses the reaction L-tyrosine + 2 reduced [NADPH--hemoprotein reductase] + 2 O2 = (E)-4-hydroxyphenylacetaldehyde oxime + 2 oxidized [NADPH--hemoprotein reductase] + CO2 + 3 H2O + 2 H(+). The catalysed reaction is L-tyrosine + reduced [NADPH--hemoprotein reductase] + O2 = N-hydroxy-L-tyrosine + oxidized [NADPH--hemoprotein reductase] + H2O + 2 H(+). The enzyme catalyses N-hydroxy-L-tyrosine + reduced [NADPH--hemoprotein reductase] + O2 = N,N-dihydroxy-L-tyrosine + oxidized [NADPH--hemoprotein reductase] + H2O + H(+). It carries out the reaction N,N-dihydroxy-L-tyrosine + H(+) = (E)-4-hydroxyphenylacetaldehyde oxime + CO2 + H2O. It functions in the pathway secondary metabolite biosynthesis; dhurrin biosynthesis; dhurrin from L-tyrosine: step 1/3. Its function is as follows. Cytochrome P450 involved in the biosynthesis of the cyanogenic glucoside dhurrin. Catalyzes the conversion of L-tyrosine to p-hydroxyphenylacetaldehyde oxime, via the N-hydroxy-L-tyrosine and N,N-dihydroxy-L-tyrosine intermediates. Produces the (E) isomer of the final oxime product. The chain is Tyrosine N-monooxygenase (CYP79A1) from Sorghum bicolor (Sorghum).